Here is a 343-residue protein sequence, read N- to C-terminus: Dihydroorotate dehydrogenase (quinone) (343 aa).

Residues 61 to 65 (AGLDK) and T85 contribute to the FMN site. K65 lines the substrate pocket. 110 to 114 (NRMGF) contacts substrate. Residues N138 and N171 each contribute to the FMN site. N171 contributes to the substrate binding site. Residue S174 is the Nucleophile of the active site. N176 lines the substrate pocket. Positions 216 and 244 each coordinate FMN. Substrate is bound at residue 245 to 246 (NT). FMN is bound by residues G267, G296, and 317 to 318 (YS).

Belongs to the dihydroorotate dehydrogenase family. Type 2 subfamily. In terms of assembly, monomer. FMN is required as a cofactor.

It localises to the cell membrane. It catalyses the reaction (S)-dihydroorotate + a quinone = orotate + a quinol. The protein operates within pyrimidine metabolism; UMP biosynthesis via de novo pathway; orotate from (S)-dihydroorotate (quinone route): step 1/1. Catalyzes the conversion of dihydroorotate to orotate with quinone as electron acceptor. In Pseudomonas savastanoi pv. phaseolicola (strain 1448A / Race 6) (Pseudomonas syringae pv. phaseolicola (strain 1448A / Race 6)), this protein is Dihydroorotate dehydrogenase (quinone).